We begin with the raw amino-acid sequence, 1166 residues long: Poly [ADP-ribose] polymerase tankyrase-2 (1166 aa).

4 ANK repeats span residues 23–52, 57–86, 90–119, and 123–152; these read PSARELFEACRNGDVERVKRLVTPEKVNSR, RKSTPLHFAAGFGRKDVVEYLLQNGANVQA, GGLIPLHNACSFGHAEVVNLLLQHGADPNA, and WNYTPLHEAAIKGKIDVCIVLLQHGAEPTI. Residue asparagine 203 is modified to (3S)-3-hydroxyasparagine; by HIF1AN. 7 ANK repeats span residues 210-239, 243-272, 276-305, 363-395, 399-428, 432-461, and 463-489; these read RKSTPLHLAAGYNRVKIVQLLLHHGADVHA, GDLVPLHNACSYGHYEVTELLVKHGACVNA, WQFTPLHEAASKNRIEVCSLLLSYGADPTL, THETALHCAAASPYPKRKQICELLLRKGANTNE, EFLTPLHVASENAHNDVVEVVVKHEAKVNA, LGQTSLHRAAHCGHLQTCRLLLSYGCDPNI, and SLQGFTALQMGNENVQQLLQEGASLGH. A (3S)-3-hydroxyhistidine; by HIF1AN modification is found at histidine 238. At asparagine 271 the chain carries (3S)-3-hydroxyasparagine; by HIF1AN. Position 427 is a (3S)-3-hydroxyasparagine; by HIF1AN (asparagine 427). (3S)-3-hydroxyasparagine; by HIF1AN is present on asparagine 518. 4 ANK repeats span residues 525 to 554, 558 to 587, 591 to 620, and 624 to 652; these read RQSTPLHFAAGYNRVSVVEYLLQHGADVHA, GGLVPLHNACSYGHYEVAELLVKHGAVVNV, WKFTPLHEAAAKGKYEICKLLLQHGADPTK, and DGNTPLDLVKDGDTDIQDLLRGDAALLDA. The tract at residues 545 to 553 is HIF1AN-binding; sequence LLQHGADVH. Histidine 553 carries the post-translational modification (3S)-3-hydroxyhistidine; by HIF1AN. Position 586 is a (3S)-3-hydroxyasparagine; by HIF1AN (asparagine 586). A (3S)-3-hydroxyasparagine; by HIF1AN mark is found at asparagine 671, asparagine 706, and asparagine 739. ANK repeat units follow at residues 678–707, 711–740, and 744–773; these read RHSTPLHLAAGYNNLEVAEYLLQHGADVNA, GGLIPLHNAASYGHVDVAALLIKYNACVNA, and WAFTPLHEAAQKGRTQLCALLLAHGADPTL. The SAM domain occupies 873-936; sequence GIDFSITQFI…IKGVERLISG (64 aa). Residues 959–1164 enclose the PARP catalytic domain; that stretch reads SPDDKEFQSV…YQIVRPEGMV (206 aa). Cysteine 1081, histidine 1084, cysteine 1089, and cysteine 1092 together coordinate Zn(2+).

This sequence belongs to the ARTD/PARP family. As to quaternary structure, oligomerizes and associates with TNKS. Interacts with the cytoplasmic domain of LNPEP/Otase in SLC2A4/GLUT4-vesicles. Binds to the N-terminus of Grb14 and TRF1 with its ankyrin repeat region. Interacts with HIF1AN. Interacts with RNF146; this interaction leads to ubiquitination and proteasomal degradation. Interacts with NUMA1. Ubiquitinated by RNF146 when auto-poly-ADP-ribosylated, leading to its degradation. Deubiquitinated by USP25; leading to stabilization. In terms of processing, ADP-ribosylated (-auto). Poly-ADP-ribosylated protein is recognized by RNF146, followed by ubiquitination.

Its subcellular location is the cytoplasm. The protein localises to the golgi apparatus membrane. It localises to the nucleus. It is found in the chromosome. The protein resides in the telomere. It carries out the reaction NAD(+) + (ADP-D-ribosyl)n-acceptor = nicotinamide + (ADP-D-ribosyl)n+1-acceptor + H(+).. It catalyses the reaction L-aspartyl-[protein] + NAD(+) = 4-O-(ADP-D-ribosyl)-L-aspartyl-[protein] + nicotinamide. The enzyme catalyses L-glutamyl-[protein] + NAD(+) = 5-O-(ADP-D-ribosyl)-L-glutamyl-[protein] + nicotinamide. Poly-ADP-ribosyltransferase involved in various processes such as Wnt signaling pathway, telomere length and vesicle trafficking. Acts as an activator of the Wnt signaling pathway by mediating poly-ADP-ribosylation of AXIN1 and AXIN2, 2 key components of the beta-catenin destruction complex: poly-ADP-ribosylated target proteins are recognized by RNF146, which mediates their ubiquitination and subsequent degradation. Also mediates poly-ADP-ribosylation of BLZF1 and CASC3, followed by recruitment of RNF146 and subsequent ubiquitination. Mediates poly-ADP-ribosylation of TERF1, thereby contributing to the regulation of telomere length. Stimulates 26S proteasome activity. The chain is Poly [ADP-ribose] polymerase tankyrase-2 from Mus musculus (Mouse).